Consider the following 430-residue polypeptide: Adenylosuccinate synthetase (430 aa).

GTP-binding positions include 12–18 (GDEGKGK) and 40–42 (GHT). The Proton acceptor role is filled by Asp-13. Mg(2+) contacts are provided by Asp-13 and Gly-40. Residues 13–16 (DEGK), 38–41 (NAGH), Thr-128, Arg-142, Gln-223, Thr-238, and Arg-302 each bind IMP. Residue His-41 is the Proton donor of the active site. 298 to 304 (TTTGRPR) lines the substrate pocket. Residues Arg-304, 330–332 (SID), and 412–414 (SVG) each bind GTP.

This sequence belongs to the adenylosuccinate synthetase family. In terms of assembly, homodimer. Requires Mg(2+) as cofactor.

The protein resides in the cytoplasm. It catalyses the reaction IMP + L-aspartate + GTP = N(6)-(1,2-dicarboxyethyl)-AMP + GDP + phosphate + 2 H(+). It participates in purine metabolism; AMP biosynthesis via de novo pathway; AMP from IMP: step 1/2. Plays an important role in the de novo pathway of purine nucleotide biosynthesis. Catalyzes the first committed step in the biosynthesis of AMP from IMP. The sequence is that of Adenylosuccinate synthetase from Enterococcus faecalis (strain ATCC 700802 / V583).